The primary structure comprises 246 residues: Phosphomannomutase 2 (246 aa).

Alanine 2 is modified (N-acetylalanine). Aspartate 12 serves as the catalytic Nucleophile. The Mg(2+) site is built by aspartate 12 and aspartate 14. Aspartate 14 functions as the Proton donor/acceptor in the catalytic mechanism. The alpha-D-mannose 1-phosphate site is built by arginine 21, arginine 123, arginine 134, arginine 141, serine 179, and aspartate 181. Mg(2+) is bound by residues aspartate 209, phenylalanine 221, aspartate 223, and threonine 226.

This sequence belongs to the eukaryotic PMM family. Homodimer.

The protein localises to the cytoplasm. The enzyme catalyses alpha-D-mannose 1-phosphate = D-mannose 6-phosphate. Its pathway is nucleotide-sugar biosynthesis; GDP-alpha-D-mannose biosynthesis; alpha-D-mannose 1-phosphate from D-fructose 6-phosphate: step 2/2. Functionally, involved in the synthesis of the GDP-mannose and dolichol-phosphate-mannose required for a number of critical mannosyl transfer reactions. The sequence is that of Phosphomannomutase 2 (PMM2) from Bos taurus (Bovine).